The sequence spans 120 residues: NAD(P)H-quinone oxidoreductase subunit 3, chloroplastic (120 aa).

The next 3 helical transmembrane spans lie at 9–29, 64–84, and 88–108; these read IFWA…LISG, MFAL…PWAM, and VLGV…ILGL.

Belongs to the complex I subunit 3 family. NDH is composed of at least 16 different subunits, 5 of which are encoded in the nucleus.

Its subcellular location is the plastid. It localises to the chloroplast thylakoid membrane. The catalysed reaction is a plastoquinone + NADH + (n+1) H(+)(in) = a plastoquinol + NAD(+) + n H(+)(out). It carries out the reaction a plastoquinone + NADPH + (n+1) H(+)(in) = a plastoquinol + NADP(+) + n H(+)(out). Functionally, NDH shuttles electrons from NAD(P)H:plastoquinone, via FMN and iron-sulfur (Fe-S) centers, to quinones in the photosynthetic chain and possibly in a chloroplast respiratory chain. The immediate electron acceptor for the enzyme in this species is believed to be plastoquinone. Couples the redox reaction to proton translocation, and thus conserves the redox energy in a proton gradient. This is NAD(P)H-quinone oxidoreductase subunit 3, chloroplastic from Arabidopsis thaliana (Mouse-ear cress).